Consider the following 349-residue polypeptide: 5-deoxyribose 1-phosphate isomerase (349 aa).

Residues 49-51 (RGA), arginine 92, and glutamine 199 contribute to the substrate site. The active-site Proton donor is aspartate 240. 250–251 (NK) contributes to the substrate binding site.

The protein belongs to the EIF-2B alpha/beta/delta subunits family. DrdI subfamily.

The enzyme catalyses 5-deoxy-alpha-D-ribose 1-phosphate = 5-deoxy-D-ribulose 1-phosphate. It functions in the pathway carbohydrate degradation. Functionally, catalyzes the isomerization of 5-deoxy-alpha-D-ribose 1-phosphate to 5-deoxy-D-ribulose 1-phosphate, as part of a 5-deoxyribose salvage pathway that recycles this toxic radical SAM enzyme by-product to mainstream metabolites. This chain is 5-deoxyribose 1-phosphate isomerase, found in Clostridium botulinum (strain ATCC 19397 / Type A).